Here is a 283-residue protein sequence, read N- to C-terminus: Methylamine utilization ferredoxin-type protein MauN (283 aa).

4Fe-4S ferredoxin-type domains are found at residues 217 to 248 (VRVS…PALK) and 251 to 280 (GSPL…MASR). [4Fe-4S] cluster is bound by residues C227, C230, C233, C237, C260, C263, C266, and C270.

It participates in one-carbon metabolism; methylamine degradation. Involved in electron transfer. The protein is Methylamine utilization ferredoxin-type protein MauN (mauN) of Paracoccus denitrificans (strain Pd 1222).